A 436-amino-acid chain; its full sequence is Nucleolar protein 4-like (436 aa).

The interval 1 to 184 (MSDSTWMSAD…KMNDSEGMDP (184 aa)) is disordered. A compositionally biased stretch (low complexity) spans 41–61 (SESGSGNGSSTLNPSTSSSTQ). Ser130 carries the phosphoserine modification. Over residues 160–169 (ADDDDDDHDD) the composition is skewed to acidic residues. Over residues 170–184 (HEDNDKMNDSEGMDP) the composition is skewed to basic and acidic residues. Residue Ser295 is modified to Phosphoserine. Residues 351-366 (QPPASLQTGNHSNGPT) are compositionally biased toward polar residues. Positions 351-400 (QPPASLQTGNHSNGPTDLSMKGGASTTSTTPTPTPSSTSTSRPVPTAQLS) are disordered. Over residues 375–396 (STTSTTPTPTPSSTSTSRPVPT) the composition is skewed to low complexity.

The polypeptide is Nucleolar protein 4-like (NOL4L) (Pongo abelii (Sumatran orangutan)).